We begin with the raw amino-acid sequence, 296 residues long: NAD kinase (296 aa).

Asp-72 serves as the catalytic Proton acceptor. Residues Asp-72 to Gly-73, Asn-146 to Asp-147, Arg-157, Lys-174, Asp-176, Thr-187 to Ser-192, and Gln-247 each bind NAD(+).

Belongs to the NAD kinase family. A divalent metal cation is required as a cofactor.

The protein resides in the cytoplasm. It catalyses the reaction NAD(+) + ATP = ADP + NADP(+) + H(+). Involved in the regulation of the intracellular balance of NAD and NADP, and is a key enzyme in the biosynthesis of NADP. Catalyzes specifically the phosphorylation on 2'-hydroxyl of the adenosine moiety of NAD to yield NADP. This is NAD kinase from Pseudomonas fluorescens (strain SBW25).